A 326-amino-acid polypeptide reads, in one-letter code: MSKIEQSWYQPVSLITILLLPLAALFWLISTLRKWLYTCGILTQFSSKTPVIVVGNISVGGNGKTPFVLWLHAHLTQQGLSVGIISRGYGGHAKQYPLLVDHNSTTLEAGDEPILLYHRLQCPIAVGPNRQQNIELLEQTSAIDVIISDDGMQHYKMARSIECCIVDSARQFGNGLLMPAGPLRETKKRLKSVDLVIENGGNNPQRYNLQPAALKSVLNNSTLTEPILTAHAVSAIGNPLRFEQSLQAQGITLVSTHHYRDHYAYTADDFTQFGDENVLMTEKDAVKCSAFAKQNWYYLPVDAQPTDSVINKLNSLLKDKGILNGL.

Position 58 to 65 (58 to 65) interacts with ATP; it reads SVGGNGKT.

This sequence belongs to the LpxK family.

It catalyses the reaction a lipid A disaccharide + ATP = a lipid IVA + ADP + H(+). The protein operates within glycolipid biosynthesis; lipid IV(A) biosynthesis; lipid IV(A) from (3R)-3-hydroxytetradecanoyl-[acyl-carrier-protein] and UDP-N-acetyl-alpha-D-glucosamine: step 6/6. Its function is as follows. Transfers the gamma-phosphate of ATP to the 4'-position of a tetraacyldisaccharide 1-phosphate intermediate (termed DS-1-P) to form tetraacyldisaccharide 1,4'-bis-phosphate (lipid IVA). This Pseudoalteromonas translucida (strain TAC 125) protein is Tetraacyldisaccharide 4'-kinase.